The sequence spans 691 residues: Amino-acid acetyltransferase, mitochondrial (691 aa).

Positions 1-27 (MSSTSLAWPRTAKSSLLQSADFSSTSK) are enriched in polar residues. 2 disordered regions span residues 1 to 29 (MSST…SKGY) and 65 to 95 (RLKA…PSGV). The span at 75–87 (QVKEPEKESKDDA) shows a compositional bias: basic and acidic residues. The 170-residue stretch at 512–681 (NRPRMSLDDP…YEAVCRSIQP (170 aa)) folds into the N-acetyltransferase domain.

The protein belongs to the acetyltransferase family.

Its subcellular location is the mitochondrion. It carries out the reaction L-glutamate + acetyl-CoA = N-acetyl-L-glutamate + CoA + H(+). Its pathway is amino-acid biosynthesis; L-arginine biosynthesis; N(2)-acetyl-L-ornithine from L-glutamate: step 1/4. Its function is as follows. N-acetylglutamate synthase involved in arginine biosynthesis. The polypeptide is Amino-acid acetyltransferase, mitochondrial (arg2) (Aspergillus terreus (strain NIH 2624 / FGSC A1156)).